Here is a 258-residue protein sequence, read N- to C-terminus: tRNA pseudouridine synthase A (258 aa).

The active-site Nucleophile is the aspartate 52. Tyrosine 110 is a substrate binding site.

The protein belongs to the tRNA pseudouridine synthase TruA family. As to quaternary structure, homodimer.

The catalysed reaction is uridine(38/39/40) in tRNA = pseudouridine(38/39/40) in tRNA. Functionally, formation of pseudouridine at positions 38, 39 and 40 in the anticodon stem and loop of transfer RNAs. The chain is tRNA pseudouridine synthase A from Francisella philomiragia subsp. philomiragia (strain ATCC 25017 / CCUG 19701 / FSC 153 / O#319-036).